A 353-amino-acid chain; its full sequence is Guanine nucleotide-binding protein subunit alpha (353 aa).

Residues 1 to 25 (MGCGMSTEDKEGKARNEEIENQLKR) form a disordered region. Glycine 2 carries the N-myristoyl glycine lipid modification. A lipid anchor (S-palmitoyl cysteine) is attached at cysteine 3. The span at 7–25 (TEDKEGKARNEEIENQLKR) shows a compositional bias: basic and acidic residues. The region spanning 32–353 (NEIKMLLLGA…QENLRLCGLI (322 aa)) is the G-alpha domain. The tract at residues 35-48 (KMLLLGAGESGKST) is G1 motif. The GTP site is built by glutamate 43, serine 44, glycine 45, lysine 46, serine 47, threonine 48, aspartate 150, leucine 175, threonine 181, glycine 203, asparagine 269, lysine 270, aspartate 272, and alanine 325. Serine 47 serves as a coordination point for Mg(2+). The tract at residues 173-181 (DVLRSRVKT) is G2 motif. Residue threonine 181 participates in Mg(2+) binding. Residues 196–205 (YRMFDVGGQR) are G3 motif. The interval 265 to 272 (ILFLNKID) is G4 motif. Residues 323–328 (TCATDT) form a G5 motif region.

It belongs to the G-alpha family. G(q) subfamily. In terms of assembly, g proteins are composed of 3 units; alpha, beta and gamma. The alpha chain contains the guanine nucleotide binding site. Requires Mg(2+) as cofactor.

Its function is as follows. Guanine nucleotide-binding proteins (G proteins) are involved as modulators or transducers in various transmembrane signaling systems. The chain is Guanine nucleotide-binding protein subunit alpha (fadA) from Emericella nidulans (strain FGSC A4 / ATCC 38163 / CBS 112.46 / NRRL 194 / M139) (Aspergillus nidulans).